We begin with the raw amino-acid sequence, 502 residues long: Neuronal acetylcholine receptor subunit alpha-7 (502 aa).

The first 22 residues, 1–22 (MCGRRGGIWLALAAALLHVSLQ), serve as a signal peptide directing secretion. At 23-233 (GEFQRRLYKE…VTMRRRTLYY (211 aa)) the chain is on the extracellular side. Ca(2+) contacts are provided by arginine 42 and valine 44. Asparagine 46, asparagine 90, and asparagine 133 each carry an N-linked (GlcNAc...) asparagine glycan. The cysteines at positions 150 and 164 are disulfide-linked. Ca(2+)-binding residues include serine 172 and tyrosine 210. Cysteine 212 and cysteine 213 form a disulfide bridge. The next 3 helical transmembrane spans lie at 234-254 (GLNL…VFLL), 262-282 (ISLG…VAEI), and 295-315 (QYFA…VIVL). Residues 260 to 267 (EKISLGIT) are essential for TMEM35A/NACHO-mediated proper subunit assembly and trafficking to cell membrane. Topologically, residues 316–469 (RYHHHDPDGG…WKFAACVVDR (154 aa)) are cytoplasmic. The chain crosses the membrane as a helical span at residues 470 to 490 (LCLMAFSVFTIICTIGILMSA).

It belongs to the ligand-gated ion channel (TC 1.A.9) family. Acetylcholine receptor (TC 1.A.9.1) subfamily. Alpha-7/CHRNA7 sub-subfamily. In terms of assembly, homopentamer. Can also form heteropentamers with CHRNB2, mainly found in basal forebrain cholinergic neurons. Interacts with RIC3; which is required for proper folding and assembly. Interacts with LYPD6. Interacts with CANX. Post-translationally, glycosylations at Asn-46, Asn-90 and Asn-133 are essential for TMEM35A/NACHO-mediated proper subunit assembly and trafficking to the cell membrane. In terms of tissue distribution, higly expressed in brain. ALso expressed in immune cells sucha as macrophages.

Its subcellular location is the postsynaptic cell membrane. The protein localises to the cell membrane. It carries out the reaction K(+)(in) = K(+)(out). The enzyme catalyses Na(+)(in) = Na(+)(out). It catalyses the reaction Ca(2+)(in) = Ca(2+)(out). The catalysed reaction is choline(out) = choline(in). It carries out the reaction NH4(+)(in) = NH4(+)(out). The enzyme catalyses L-arginine(in) = L-arginine(out). It catalyses the reaction guanidine(out) = guanidine(in). Its activity is regulated as follows. Activated by a myriad of ligands such as acetylcholine, cytisine, nicotine, choline and epibatidine. Oligomeric amyloid-beta protein 42 activates specifially CHRNA7:CHRNB2 nAchRs. Activity is modulated by positive allosteric modulators (PAMs), such as flavonoids, with a wide range of chemical diversity, pharmacological sensitivity and efficacy. AChR activity is inhibited by the antagonists alpha-conotoxons RgIA, ImI and ImII, small disulfide-constrained peptides from cone snails. In terms of biological role, component of neuronal acetylcholine receptors (nAChRs) that function as pentameric, ligand-gated cation channels with high calcium permeability among other activities. nAChRs are excitatory neurotrasnmitter receptors formed by a collection of nAChR subunits known to mediate synaptic transmission in the nervous system and the neuromuscular junction. Each nAchR subunit confers differential attributes to channel properties, including activation, deactivation and desensitization kinetics, pH sensitivity, cation permeability, and binding to allosteric modulators. CHRNA7 forms homopentameric neuronal acetylcholine receptors abundantly expressed in the central nervous system, characterized by fast desensitization and high calcium permeability. Also forms heteropentamers with CHRNB2, mainly expressed in basal forebrain cholinergic neurons. Involved in the modulation of calcium-dependent signaling pathways and influences the release of neurotransmitters, including dopamine, glutamate and GABA. Involved in the modulation of calcium-dependent signaling pathways and influences the release of neurotransmitters, including dopamine, glutamate and GABA. Also expressed in non-neuronal cells such as immune cells like lymphocytes, monocytes and macrophages. In T cells, activation induces metabotropic signaling that results in an increase of intracellular Ca2+ concentrations, independent of ionotropic receptor functions. In macrophages, required for acetylcholine-mediated inhibition of TNF and other inflammatory cytokine release. Once activated by acetylcholine, nicotine or other agonists, selectively inhibits production of pro-inflammatory cytokines while leaving anti-inflammatory cytokines undisturbed. Stimulates the cholinergic anti-inflammatory pathway, controlling inflammation by inhibiting NFKB nuclear translocation and activating the JAK2-STAT3 pathway, independently of ion channel activity. Also expressed in the urothelium where it modulates reflex bladder activity by increasing intracellular calcium through internal stores and decreasing basal ATP release. The chain is Neuronal acetylcholine receptor subunit alpha-7 (Chrna7) from Mus musculus (Mouse).